We begin with the raw amino-acid sequence, 552 residues long: Hyaluronan synthase 2 (552 aa).

Residues 1-11 lie on the Cytoplasmic side of the membrane; the sequence is MYCERFICILR. The helical transmembrane segment at 12–32 threads the bilayer; sequence ILGTTLFGVSLLLGITAAYIV. Topologically, residues 33 to 45 are extracellular; the sequence is GYQFIQTDNYYFS. Residues 46 to 66 form a helical membrane-spanning segment; the sequence is FGLYGAILASHLIIQSLFAYL. Residues 67–374 are Cytoplasmic-facing; sequence EHRKMKRSLE…NAMWFHKHHL (308 aa). The helical transmembrane segment at 375-395 threads the bilayer; that stretch reads WMTYEAVITGFFPFFLIATVI. Residues 396–402 are Extracellular-facing; the sequence is QLFYRGK. Residues 403-423 form a helical membrane-spanning segment; that stretch reads IWNILLFLLTVQLVGLIKSSF. At 424–429 the chain is on the cytoplasmic side; that stretch reads ASFLRG. Residues 430–450 traverse the membrane as a helical segment; the sequence is NIVMVFMSLYSVLYMSSLLPA. Topologically, residues 451–475 are extracellular; that stretch reads KMFAIATINKAGWGTSGRKTIVVNF. The helical transmembrane segment at 476–496 threads the bilayer; the sequence is IGLIPVSIWFTILLGRVIFTI. Topologically, residues 497-510 are cytoplasmic; that stretch reads YKESKKPFSESKTT. A helical membrane pass occupies residues 511 to 531; that stretch reads VLVIGTILYACYWVLLLTLYL. The Extracellular portion of the chain corresponds to 532-552; the sequence is VLITKCGRRKKEQHYDMVLDV.

Belongs to the NodC/HAS family. In terms of assembly, homodimer; dimerization promotes enzymatic activity. Mg(2+) is required as a cofactor.

The protein localises to the cell membrane. Its subcellular location is the endoplasmic reticulum membrane. It is found in the vesicle. It localises to the golgi apparatus membrane. The protein resides in the lysosome. It catalyses the reaction [hyaluronan](n) + UDP-N-acetyl-alpha-D-glucosamine = N-acetyl-beta-D-glucosaminyl-(1-&gt;4)-[hyaluronan](n) + UDP + H(+). The enzyme catalyses N-acetyl-beta-D-glucosaminyl-(1-&gt;4)-[hyaluronan](n) + UDP-alpha-D-glucuronate = [hyaluronan](n+1) + UDP + H(+). Its pathway is glycan biosynthesis; hyaluronan biosynthesis. In terms of biological role, catalyzes the addition of GlcNAc or GlcUA monosaccharides to the nascent hyaluronan polymer. Therefore, it is essential to hyaluronan synthesis a major component of most extracellular matrices that has a structural role in tissues architectures and regulates cell adhesion, migration and differentiation. This is one of three isoenzymes responsible for cellular hyaluronan synthesis and it is particularly responsible for the synthesis of high molecular mass hyaluronan. The protein is Hyaluronan synthase 2 (HAS2) of Gallus gallus (Chicken).